Consider the following 658-residue polypeptide: Protein CFAP20DC (658 aa).

2 disordered regions span residues Gln-312–Tyr-522 and Pro-589–Ser-634. Polar residues predominate over residues Ser-319 to Leu-328. Basic and acidic residues predominate over residues Pro-339–Ser-349. 2 stretches are compositionally biased toward low complexity: residues Arg-351–Arg-363 and Ser-417–Asp-434. Residues Asp-494–Thr-506 are compositionally biased toward basic and acidic residues. Residues Glu-507–Glu-521 show a composition bias toward acidic residues. Residues Gln-625–Ser-634 show a composition bias toward polar residues.

The protein is Protein CFAP20DC of Rattus norvegicus (Rat).